Here is a 2210-residue protein sequence, read N- to C-terminus: Genome polyprotein (2210 aa).

A disordered region spans residues 1–24 (MAPVVSRDQCKPKTPKPHRPAPPH). Positions 13–22 (KTPKPHRPAP) are enriched in basic residues. The SF3 helicase domain maps to 426-585 (SNKIVELSTM…ADFLRQHPGV (160 aa)). 456–463 (GPPGHGKS) contributes to the ATP binding site. At Tyr-940 the chain carries O-(5'-phospho-RNA)-tyrosine. Residues 991 to 1136 (GNNCDDIPLH…KVITPITPEP (146 aa)) form the Peptidase C24 domain. Catalysis depends on for 3CLpro activity residues His-1025, Asp-1039, and Cys-1103. A RdRp catalytic domain is found at 1379-1501 (DHCLELDYSK…TIPSHLTKSI (123 aa)). A disordered region spans residues 1656–1685 (LIREGNMSDNKSIPEQQHESSRAMDAGATG).

Specific enzymatic cleavages by its own cysteine protease yield mature proteins. The protease cleaves itself from the nascent polyprotein autocatalytically. Precursor p41 can be cleaved by viral 3CLpro into protein p19 and VPg, or cleaved by host protease into protein p23/2 and protein p18. In terms of processing, VPg is uridylylated by the polymerase and is covalently attached to the 5'-end of the polyadenylated genomic and subgenomic RNAs. This uridylylated form acts as a nucleotide-peptide primer for the polymerase.

It localises to the virion. Its subcellular location is the host cytoplasm. The catalysed reaction is a ribonucleoside 5'-triphosphate + H2O = a ribonucleoside 5'-diphosphate + phosphate + H(+). It carries out the reaction Endopeptidase with a preference for cleavage when the P1 position is occupied by Glu-|-Xaa and the P1' position is occupied by Gly-|-Yaa.. It catalyses the reaction RNA(n) + a ribonucleoside 5'-triphosphate = RNA(n+1) + diphosphate. Its function is as follows. Displays NTPase activity, but no helicase activity. Induces the formation of convoluted membranes derived from the host ER. These remodeled membranes probably form the viral factories that contain the replication complex. Together with NS2 and NS4, initiates the formation of the replication complex. In terms of biological role, viral genome-linked protein is covalently linked to the 5'-end of the positive-strand, negative-strand genomic RNAs and subgenomic RNA. Acts as a genome-linked replication primer. May recruit ribosome to viral RNA thereby promoting viral proteins translation. Interacts with host translation initiation complex to allow the translation of viral proteins. Functionally, processes the polyprotein. 3CLpro-RdRp is first released by autocleavage, then all other proteins are cleaved. May cleave polyadenylate-binding protein thereby inhibiting cellular translation. Replicates genomic and antigenomic RNA by recognizing replications specific signals. Also transcribes a subgenomic mRNA by initiating RNA synthesis internally on antigenomic RNA. This sgRNA codes for structural proteins. Catalyzes the covalent attachment VPg with viral RNAs. Its function is as follows. Capsid protein self assembles to form an icosahedral capsid with a T=3 symmetry, about 35 nm in diameter, and consisting of 180 capsid proteins. A smaller form of capsid with a diameter of 23 nm might be capsid proteins assembled as icosahedron with T=1 symmetry. The capsid encapsulate VP2 proteins and genomic or subgenomic RNA. Attaches virion to target cells by binding histo-blood group antigens, inducing endocytosis of the viral particle. Acidification of the endosome induces conformational change of capsid protein thereby injecting virus genomic RNA into host cytoplasm. The sequence is that of Genome polyprotein from Bovine enteric calicivirus NB (isolate Bovine/United States/N ebraska/1980) (BEC-NB).